Here is a 396-residue protein sequence, read N- to C-terminus: Flavohemoprotein (396 aa).

The Globin domain maps to 1 to 136 (MLDAQTIATV…LANVFINREA (136 aa)). His85 is a binding site for heme b. Active-site charge relay system residues include Tyr95 and Glu135. A reductase region spans residues 147 to 396 (GGWEGTRDFR…YECFGPHKVL (250 aa)). The region spanning 150–255 (EGTRDFRIVA…VAPAGDFFMA (106 aa)) is the FAD-binding FR-type domain. FAD-binding positions include Tyr188 and 204–207 (RQYS). 268-273 (GVGQTP) contributes to the NADP(+) binding site. An FAD-binding site is contributed by 389–392 (CFGP).

It belongs to the globin family. Two-domain flavohemoproteins subfamily. In the C-terminal section; belongs to the flavoprotein pyridine nucleotide cytochrome reductase family. The cofactor is heme b. FAD is required as a cofactor.

It catalyses the reaction 2 nitric oxide + NADPH + 2 O2 = 2 nitrate + NADP(+) + H(+). It carries out the reaction 2 nitric oxide + NADH + 2 O2 = 2 nitrate + NAD(+) + H(+). Its function is as follows. Is involved in NO detoxification in an aerobic process, termed nitric oxide dioxygenase (NOD) reaction that utilizes O(2) and NAD(P)H to convert NO to nitrate, which protects the bacterium from various noxious nitrogen compounds. Therefore, plays a central role in the inducible response to nitrosative stress. This Shigella flexneri protein is Flavohemoprotein.